The following is a 185-amino-acid chain: UPF0200 protein Mevan_0592 (185 aa).

Residue 8-15 coordinates ATP; that stretch reads GMPGSGKS.

It belongs to the UPF0200 family.

The polypeptide is UPF0200 protein Mevan_0592 (Methanococcus vannielii (strain ATCC 35089 / DSM 1224 / JCM 13029 / OCM 148 / SB)).